The primary structure comprises 495 residues: Aspartyl/glutamyl-tRNA(Asn/Gln) amidotransferase subunit B (495 aa).

Belongs to the GatB/GatE family. GatB subfamily. As to quaternary structure, heterotrimer of A, B and C subunits.

It carries out the reaction L-glutamyl-tRNA(Gln) + L-glutamine + ATP + H2O = L-glutaminyl-tRNA(Gln) + L-glutamate + ADP + phosphate + H(+). The enzyme catalyses L-aspartyl-tRNA(Asn) + L-glutamine + ATP + H2O = L-asparaginyl-tRNA(Asn) + L-glutamate + ADP + phosphate + 2 H(+). Its function is as follows. Allows the formation of correctly charged Asn-tRNA(Asn) or Gln-tRNA(Gln) through the transamidation of misacylated Asp-tRNA(Asn) or Glu-tRNA(Gln) in organisms which lack either or both of asparaginyl-tRNA or glutaminyl-tRNA synthetases. The reaction takes place in the presence of glutamine and ATP through an activated phospho-Asp-tRNA(Asn) or phospho-Glu-tRNA(Gln). The polypeptide is Aspartyl/glutamyl-tRNA(Asn/Gln) amidotransferase subunit B (Gloeothece citriformis (strain PCC 7424) (Cyanothece sp. (strain PCC 7424))).